We begin with the raw amino-acid sequence, 212 residues long: Pyridoxine/pyridoxamine 5'-phosphate oxidase (212 aa).

Residues 7 to 10 (RAKY) and Lys65 contribute to the substrate site. Residues 60-65 (RTVLLK), 75-76 (FT), Lys82, and Gln104 contribute to the FMN site. Substrate is bound by residues Tyr122, Arg126, and Ser130. FMN-binding positions include 139–140 (QS) and Trp184. Position 190–192 (190–192 (RLH)) interacts with substrate. Arg194 lines the FMN pocket.

The protein belongs to the pyridoxamine 5'-phosphate oxidase family. As to quaternary structure, homodimer. The cofactor is FMN.

The enzyme catalyses pyridoxamine 5'-phosphate + O2 + H2O = pyridoxal 5'-phosphate + H2O2 + NH4(+). It catalyses the reaction pyridoxine 5'-phosphate + O2 = pyridoxal 5'-phosphate + H2O2. The protein operates within cofactor metabolism; pyridoxal 5'-phosphate salvage; pyridoxal 5'-phosphate from pyridoxamine 5'-phosphate: step 1/1. It participates in cofactor metabolism; pyridoxal 5'-phosphate salvage; pyridoxal 5'-phosphate from pyridoxine 5'-phosphate: step 1/1. Its function is as follows. Catalyzes the oxidation of either pyridoxine 5'-phosphate (PNP) or pyridoxamine 5'-phosphate (PMP) into pyridoxal 5'-phosphate (PLP). This Aliarcobacter butzleri (strain RM4018) (Arcobacter butzleri) protein is Pyridoxine/pyridoxamine 5'-phosphate oxidase.